The primary structure comprises 532 residues: 4-amino-L-phenylalanyl-[CmlP-peptidyl-carrier-protein] 3-hydroxylase (532 aa).

Positions 305, 307, 309, 310, 377, and 403 each coordinate Fe cation.

Belongs to the metallo-beta-lactamase superfamily. Homodimer. It depends on Fe(2+) as a cofactor.

It carries out the reaction 4-amino-L-phenylalanyl-[peptidyl-carrier protein] + AH2 + O2 = (2R)-2-(4-aminophenyl)-L-seryl-[peptidyl-carrier protein] + A + H2O. The protein operates within antibiotic biosynthesis. Involved in chloramphenicol biosynthesis. Catalyzes the beta-hydroxylation of 4-amino-L-phenylalanine (L-PAPA) covalently bound to CmlP to form L-p-aminophenylserine. This chain is 4-amino-L-phenylalanyl-[CmlP-peptidyl-carrier-protein] 3-hydroxylase, found in Streptomyces venezuelae (strain ATCC 10712 / CBS 650.69 / DSM 40230 / JCM 4526 / NBRC 13096 / PD 04745).